Here is a 4249-residue protein sequence, read N- to C-terminus: Fibrocystin-L (4249 aa).

The N-terminal stretch at 1–20 (MGHLWLSGTWFLFGLLWCAA) is a signal peptide. Residues 21–4222 (DSHKGSSETI…TPVQTLAVIT (4202 aa)) are Extracellular-facing. IPT/TIG domains are found at residues 31-132 (PKVT…GVAS), 146-255 (PTIR…KMTY), 270-361 (PEVV…ILEY), 1067-1153 (PLIL…HFIY), 1155-1234 (SQIS…SFSY), 1240-1323 (PVVT…KLNA), 1329-1468 (LEVI…SFSY), 1565-1648 (PSII…TLTK), 1658-1742 (PNID…SFSY), 1748-1827 (PYVT…NLTI), 1830-1909 (PAVA…SFTY), 1915-1996 (PFLK…AFEY), 1998-2084 (LSIQ…LFTY), and 2090-2175 (PLIT…DFLY). A PA14 domain is found at 337–492 (PGGRGLKVEV…NVFTEQQTGD (156 aa)). Residues Thr1297 and Thr1359 are each glycosylated (O-linked (GalNAc...) threonine). O-linked (GalNAc...) threonine glycosylation is present at Thr1838. Residues 2183-2303 (SSWGGSPPPE…IPVVWTRLTH (121 aa)) enclose the G8 1 domain. 5 PbH1 repeats span residues 2484–2506 (QFKS…TIHN), 2507–2529 (THHL…FIED), 2565–2587 (NPNN…WYRM), 2664–2686 (GGAL…ETKR), and 2732–2755 (SQGL…ALGV). The G8 2 domain occupies 3035-3173 (SFWQSSPENN…HSVYKTKLLE (139 aa)). PbH1 repeat units lie at residues 3292–3314 (KGNA…RDST), 3354–3376 (TDGV…RIWG), 3415–3437 (GTNT…RIDG), 3470–3492 (PGCS…YFQT), and 3493–3514 (TESV…FSMV). A glycan (O-linked (GalNAc...) threonine) is linked at Thr3735. Residues 4183 to 4208 (LSAQSVPGGSGSSPGSGSSSSGHSKA) are disordered. Low complexity predominate over residues 4197 to 4208 (GSGSSSSGHSKA). The chain crosses the membrane as a helical span at residues 4223-4243 (ACLVGRLLLLEVFMAAVFILN). The Cytoplasmic portion of the chain corresponds to 4244-4249 (TTVGIN).

In terms of tissue distribution, expressed in neurons in the hippocampus and the cerebral cortex (at protein level). Transiently expressed at high levels in inner ear hair cells, predominantly in outer hair cells, during early postnatal development (at protein level).

The protein localises to the membrane. It localises to the cell projection. The protein resides in the stereocilium membrane. Functionally, component of hair-cell stereocilia coat. Required for normal hearing. The protein is Fibrocystin-L (Pkhd1l1) of Mus musculus (Mouse).